Consider the following 106-residue polypeptide: Large ribosomal subunit protein bL21 (106 aa).

The protein belongs to the bacterial ribosomal protein bL21 family. In terms of assembly, part of the 50S ribosomal subunit. Contacts protein L20.

In terms of biological role, this protein binds to 23S rRNA in the presence of protein L20. This Coprothermobacter proteolyticus (strain ATCC 35245 / DSM 5265 / OCM 4 / BT) protein is Large ribosomal subunit protein bL21.